Consider the following 399-residue polypeptide: Lipid droplet-regulating VLDL assembly factor AUP1 (399 aa).

Over 1 to 21 (MEQPSLESMLELQRFPRNPFS) the chain is Cytoplasmic. The stretch at 22-42 (LVLLLLYFPFGLCLFLIRLFI) is an intramembrane region. Over 43 to 399 (GAHVFLVSCV…GEEEEEGARG (357 aa)) the chain is Cytoplasmic. Residues 284-326 (THIQMAQHVKEVLPQVPLSAIHRDLGHTGCVDTTITNFLEGRV) form the CUE domain. The interval 332–364 (EEETTGAAEGTSKSRVSRPLPQGFAKKPEDRHL) is disordered.

Belongs to the AUP1 family.

It is found in the endoplasmic reticulum membrane. The protein localises to the lipid droplet. In terms of biological role, plays a role in the translocation of terminally misfolded proteins from the endoplasmic reticulum lumen to the cytoplasm and their degradation by the proteasome. Plays a role in lipid droplet formation. Induces lipid droplet clustering. This Xenopus laevis (African clawed frog) protein is Lipid droplet-regulating VLDL assembly factor AUP1.